The following is an 860-amino-acid chain: LPS-assembly protein LptD (860 aa).

The N-terminal stretch at 1–21 (MTKRYFSLLAVCSAIATSTFA) is a signal peptide.

Belongs to the LptD family. Component of the lipopolysaccharide transport and assembly complex. Interacts with LptE and LptA.

It localises to the cell outer membrane. Its function is as follows. Together with LptE, is involved in the assembly of lipopolysaccharide (LPS) at the surface of the outer membrane. The polypeptide is LPS-assembly protein LptD (Saccharophagus degradans (strain 2-40 / ATCC 43961 / DSM 17024)).